A 30-amino-acid polypeptide reads, in one-letter code: Cyclotide cter-O (30 aa).

Residues 1-30 (GIPCGESCVFIPCITGIAGCSCKSKVCYRN) constitute a cross-link (cyclopeptide (Gly-Asn)). Cystine bridges form between cysteine 4/cysteine 20, cysteine 8/cysteine 22, and cysteine 13/cysteine 27.

In terms of processing, this is a cyclic peptide.

The protein resides in the secreted. Functionally, probably participates in a plant defense mechanism. This chain is Cyclotide cter-O, found in Clitoria ternatea (Butterfly pea).